Here is a 280-residue protein sequence, read N- to C-terminus: UPF0276 protein CC_3255 (280 aa).

It belongs to the UPF0276 family.

In Caulobacter vibrioides (strain ATCC 19089 / CIP 103742 / CB 15) (Caulobacter crescentus), this protein is UPF0276 protein CC_3255.